A 185-amino-acid polypeptide reads, in one-letter code: Ion-translocating oxidoreductase complex subunit B (185 aa).

Residues 1–26 (MNHILLIILIFAALALIFGLLLGFAA) are hydrophobic. One can recognise a 4Fe-4S domain in the interval 32 to 90 (ESDPIVDQLDALLPQTQCGQCGYPGCRPYAEAIANGDSINKCVPGGAQTIQNIADLMGV). Cys-49, Cys-52, Cys-57, Cys-73, Cys-115, Cys-118, Cys-121, Cys-125, Cys-145, Cys-148, Cys-151, and Cys-155 together coordinate [4Fe-4S] cluster. 2 4Fe-4S ferredoxin-type domains span residues 106–135 (RVAF…GAPK) and 136–165 (LMHT…MIEL).

It belongs to the 4Fe4S bacterial-type ferredoxin family. RnfB subfamily. In terms of assembly, the complex is composed of six subunits: RnfA, RnfB, RnfC, RnfD, RnfE and RnfG. [4Fe-4S] cluster is required as a cofactor.

It is found in the cell inner membrane. Its function is as follows. Part of a membrane-bound complex that couples electron transfer with translocation of ions across the membrane. The sequence is that of Ion-translocating oxidoreductase complex subunit B from Tolumonas auensis (strain DSM 9187 / NBRC 110442 / TA 4).